A 302-amino-acid polypeptide reads, in one-letter code: Large ribosomal subunit protein uL18 (302 aa).

It belongs to the universal ribosomal protein uL18 family. As to quaternary structure, component of the large ribosomal subunit (LSU).

The protein localises to the cytoplasm. It localises to the nucleus. Component of the ribosome, a large ribonucleoprotein complex responsible for the synthesis of proteins in the cell. The small ribosomal subunit (SSU) binds messenger RNAs (mRNAs) and translates the encoded message by selecting cognate aminoacyl-transfer RNA (tRNA) molecules. The large subunit (LSU) contains the ribosomal catalytic site termed the peptidyl transferase center (PTC), which catalyzes the formation of peptide bonds, thereby polymerizing the amino acids delivered by tRNAs into a polypeptide chain. The nascent polypeptides leave the ribosome through a tunnel in the LSU and interact with protein factors that function in enzymatic processing, targeting, and the membrane insertion of nascent chains at the exit of the ribosomal tunnel. This chain is Large ribosomal subunit protein uL18 (RPL5), found in Cucumis sativus (Cucumber).